Consider the following 447-residue polypeptide: C4-dicarboxylate transport protein (447 aa).

The next 10 helical transmembrane spans lie at 21–41 (HLYV…YFAP), 57–77 (LVKM…IAGM), 92–112 (IYFL…VNIV), 141–161 (SLIG…LASG), 163–183 (ILQV…VGEA), 201–221 (LVAI…AYTV), 232–252 (LAML…IVLG), 320–340 (IYMT…LSWG), 345–365 (LLAV…AGFV), and 368–388 (AATL…IFGV).

This sequence belongs to the dicarboxylate/amino acid:cation symporter (DAACS) (TC 2.A.23) family.

It is found in the cell inner membrane. Functionally, responsible for the transport of dicarboxylates such as succinate, fumarate, and malate from the periplasm across the membrane. The protein is C4-dicarboxylate transport protein of Granulibacter bethesdensis (strain ATCC BAA-1260 / CGDNIH1).